The sequence spans 213 residues: Peptidyl-tRNA hydrolase (213 aa).

Tyr-15 lines the tRNA pocket. His-20 (proton acceptor) is an active-site residue. TRNA is bound by residues Phe-66, Asn-68, and Asn-114. Residues 187 to 213 form a disordered region; sequence HTTKPPRPKPPRPAAAPVDAPAAPGDQ. Residues 201-213 show a composition bias toward low complexity; the sequence is AAPVDAPAAPGDQ.

The protein belongs to the PTH family. In terms of assembly, monomer.

The protein localises to the cytoplasm. The enzyme catalyses an N-acyl-L-alpha-aminoacyl-tRNA + H2O = an N-acyl-L-amino acid + a tRNA + H(+). Functionally, hydrolyzes ribosome-free peptidyl-tRNAs (with 1 or more amino acids incorporated), which drop off the ribosome during protein synthesis, or as a result of ribosome stalling. Its function is as follows. Catalyzes the release of premature peptidyl moieties from peptidyl-tRNA molecules trapped in stalled 50S ribosomal subunits, and thus maintains levels of free tRNAs and 50S ribosomes. This is Peptidyl-tRNA hydrolase from Paracidovorax citrulli (strain AAC00-1) (Acidovorax citrulli).